We begin with the raw amino-acid sequence, 191 residues long: dTTP/UTP pyrophosphatase (191 aa).

The Proton acceptor role is filled by Asp71.

It belongs to the Maf family. YhdE subfamily. It depends on a divalent metal cation as a cofactor.

It is found in the cytoplasm. The catalysed reaction is dTTP + H2O = dTMP + diphosphate + H(+). The enzyme catalyses UTP + H2O = UMP + diphosphate + H(+). Nucleoside triphosphate pyrophosphatase that hydrolyzes dTTP and UTP. May have a dual role in cell division arrest and in preventing the incorporation of modified nucleotides into cellular nucleic acids. In Hyphomonas neptunium (strain ATCC 15444), this protein is dTTP/UTP pyrophosphatase.